The sequence spans 151 residues: Ribonuclease H (151 aa).

Positions 1–141 (MKHVDIFTDG…ADELARKGME (141 aa)) constitute an RNase H type-1 domain. Residues D9, E47, D69, and D133 each coordinate Mg(2+).

Belongs to the RNase H family. As to quaternary structure, monomer. Mg(2+) serves as cofactor.

It localises to the cytoplasm. The enzyme catalyses Endonucleolytic cleavage to 5'-phosphomonoester.. Functionally, endonuclease that specifically degrades the RNA of RNA-DNA hybrids. This chain is Ribonuclease H, found in Rhizobium johnstonii (strain DSM 114642 / LMG 32736 / 3841) (Rhizobium leguminosarum bv. viciae).